Here is a 533-residue protein sequence, read N- to C-terminus: Thromboxane-A synthase (533 aa).

The Cytoplasmic portion of the chain corresponds to 1-10 (MEALGFLKLE). The helical transmembrane segment at 11-31 (VNGPMVTVALSVALLALLKWY) threads the bilayer. Topologically, residues 32-75 (STSAFSRLEKLGLRHPKPSPFIGNLMFFRQGFWESQMELRKLYG) are lumenal. Residues 76–96 (PLCGYYLGRRMFIVISEPDMI) traverse the membrane as a helical segment. Topologically, residues 97 to 223 (KQVLVENFSN…KRFFEFCIPR (127 aa)) are cytoplasmic. The chain crosses the membrane as a helical span at residues 224 to 244 (PILVLLLSFPSIMVPLARILP). The Lumenal portion of the chain corresponds to 245 to 335 (NKNRDELNGF…LTVDEIVGQA (91 aa)). The helical transmembrane segment at 336-356 (FIFLIAGYEIVTNTLSFATYL) threads the bilayer. Residues 357–533 (LATNPDCQEK…NGVYIKIVSR (177 aa)) are Cytoplasmic-facing. Cys-479 contributes to the heme binding site.

The protein belongs to the cytochrome P450 family. Monomer. Heme serves as cofactor.

Its subcellular location is the endoplasmic reticulum membrane. It catalyses the reaction prostaglandin H2 = thromboxane A2. The enzyme catalyses prostaglandin H2 = (12S)-hydroxy-(5Z,8E,10E)-heptadecatrienoate + malonaldehyde. It carries out the reaction a hydroperoxyeicosatetraenoate = an oxoeicosatetraenoate + H2O. The catalysed reaction is (15S)-hydroperoxy-(5Z,8Z,11Z,13E)-eicosatetraenoate = 15-oxo-(5Z,8Z,11Z,13E)-eicosatetraenoate + H2O. It catalyses the reaction (15S)-hydroperoxy-(5Z,8Z,11Z,13E)-eicosatetraenoate + AH2 = (15S)-hydroxy-(5Z,8Z,11Z,13E)-eicosatetraenoate + A + H2O. Catalyzes the conversion of prostaglandin H2 (PGH2) to thromboxane A2 (TXA2), a potent inducer of blood vessel constriction and platelet aggregation. Also cleaves PGH2 to 12-hydroxy-heptadecatrienoicacid (12-HHT) and malondialdehyde, which is known to act as a mediator of DNA damage. 12-HHT and malondialdehyde are formed stoichiometrically in the same amounts as TXA2. Additionally, displays dehydratase activity, toward (15S)-hydroperoxy-(5Z,8Z,11Z,13E)-eicosatetraenoate (15(S)-HPETE) producing 15-KETE and 15-HETE. In Macaca fascicularis (Crab-eating macaque), this protein is Thromboxane-A synthase (TBXAS1).